The primary structure comprises 492 residues: Cysteine--tRNA ligase (492 aa).

C29 is a Zn(2+) binding site. The short motif at 31–41 (PTVYDYAHIGN) is the 'HIGH' region element. Zn(2+)-binding residues include C222, H247, and E251. Positions 279-283 (KMSKS) match the 'KMSKS' region motif. K282 contacts ATP.

The protein belongs to the class-I aminoacyl-tRNA synthetase family. Monomer. Requires Zn(2+) as cofactor.

It is found in the cytoplasm. The enzyme catalyses tRNA(Cys) + L-cysteine + ATP = L-cysteinyl-tRNA(Cys) + AMP + diphosphate. The polypeptide is Cysteine--tRNA ligase (Treponema denticola (strain ATCC 35405 / DSM 14222 / CIP 103919 / JCM 8153 / KCTC 15104)).